The chain runs to 291 residues: Elongation factor Ts (291 aa).

The tract at residues 78–81 (TDFV) is involved in Mg(2+) ion dislocation from EF-Tu.

Belongs to the EF-Ts family.

The protein localises to the cytoplasm. In terms of biological role, associates with the EF-Tu.GDP complex and induces the exchange of GDP to GTP. It remains bound to the aminoacyl-tRNA.EF-Tu.GTP complex up to the GTP hydrolysis stage on the ribosome. This is Elongation factor Ts from Ureaplasma urealyticum serovar 10 (strain ATCC 33699 / Western).